A 148-amino-acid polypeptide reads, in one-letter code: Putative pre-16S rRNA nuclease (148 aa).

This sequence belongs to the YqgF nuclease family.

Its subcellular location is the cytoplasm. Could be a nuclease involved in processing of the 5'-end of pre-16S rRNA. This is Putative pre-16S rRNA nuclease from Nitrosomonas europaea (strain ATCC 19718 / CIP 103999 / KCTC 2705 / NBRC 14298).